Here is a 500-residue protein sequence, read N- to C-terminus: Cytochrome P450 11B3, mitochondrial (500 aa).

The N-terminal 24 residues, 1-24, are a transit peptide targeting the mitochondrion; that stretch reads MALRVTADVWLARPWQCLHRTRAL. C447 lines the heme pocket.

Belongs to the cytochrome P450 family. It depends on heme as a cofactor. As to expression, expressed in the adrenal cortex and in different brain tissues, including hippocampus, hypothalamus, cerebellum, cerebral cortex, and midbrain.

Its subcellular location is the mitochondrion membrane. It catalyses the reaction a steroid + 2 reduced [adrenodoxin] + O2 + 2 H(+) = an 11beta-hydroxysteroid + 2 oxidized [adrenodoxin] + H2O. It carries out the reaction 21-hydroxyprogesterone + 2 reduced [adrenodoxin] + O2 + 2 H(+) = corticosterone + 2 oxidized [adrenodoxin] + H2O. The catalysed reaction is 21-hydroxyprogesterone + 2 reduced [adrenodoxin] + O2 + 2 H(+) = 18-hydroxy-11-deoxycorticosterone + 2 oxidized [adrenodoxin] + H2O. The enzyme catalyses 21-hydroxyprogesterone + 2 reduced [adrenodoxin] + O2 + 2 H(+) = 19-hydroxy-11-deoxycorticosterone + 2 oxidized [adrenodoxin] + H2O. A cytochrome P450 monooxygenase involved in the biosynthesis of adrenal corticoids. Catalyzes the hydroxylation of steroids at 11beta, 18- or 19-positions, with preferred regioselectivity at 11beta and 18. Converts 11-deoxycorticosterone into corticosterone, 18-hydroxy-11-deoxycorticosterone, and/or 19-hydroxy-11-deoxycorticosterone, but not to 18-hydroxycorticosterone or aldosterone. Mechanistically, uses molecular oxygen inserting one oxygen atom into a substrate for hydroxylation and reducing the second into a water molecule. Two electrons are provided by NADPH via a two-protein mitochondrial transfer system comprising flavoprotein FDXR (adrenodoxin/ferredoxin reductase) and nonheme iron-sulfur protein FDX1 or FDX2 (adrenodoxin/ferredoxin). The sequence is that of Cytochrome P450 11B3, mitochondrial (Cyp11b3) from Rattus norvegicus (Rat).